Here is a 419-residue protein sequence, read N- to C-terminus: Histidine--tRNA ligase (419 aa).

Belongs to the class-II aminoacyl-tRNA synthetase family. In terms of assembly, homodimer.

It is found in the cytoplasm. It carries out the reaction tRNA(His) + L-histidine + ATP = L-histidyl-tRNA(His) + AMP + diphosphate + H(+). This is Histidine--tRNA ligase from Thiobacillus denitrificans (strain ATCC 25259 / T1).